The chain runs to 146 residues: 3-hydroxyacyl-[acyl-carrier-protein] dehydratase FabZ (146 aa).

Residue H49 is part of the active site.

The protein belongs to the thioester dehydratase family. FabZ subfamily.

It localises to the cytoplasm. The enzyme catalyses a (3R)-hydroxyacyl-[ACP] = a (2E)-enoyl-[ACP] + H2O. Its function is as follows. Involved in unsaturated fatty acids biosynthesis. Catalyzes the dehydration of short chain beta-hydroxyacyl-ACPs and long chain saturated and unsaturated beta-hydroxyacyl-ACPs. The polypeptide is 3-hydroxyacyl-[acyl-carrier-protein] dehydratase FabZ (Azotobacter vinelandii (strain DJ / ATCC BAA-1303)).